The chain runs to 149 residues: Ribonuclease pancreatic (149 aa).

The signal sequence occupies residues 1-25 (MGLEKSLILFPLFVLLLGWVQPSLG). Positions 30–49 (AQKFERQHMDSSGSSNNSPT) are disordered. Substrate-binding residues include Lys32 and Arg35. Residue His37 is the Proton acceptor of the active site. Over residues 39-49 (DSSGSSNNSPT) the composition is skewed to polar residues. Cystine bridges form between Cys51-Cys109, Cys65-Cys120, Cys83-Cys135, and Cys90-Cys97. 66-70 (KPVNT) provides a ligand contact to substrate. N-linked (GlcNAc...) asparagine glycosylation is present at Asn87. A substrate-binding site is contributed by Lys91. His144 serves as the catalytic Proton donor.

Belongs to the pancreatic ribonuclease family. In terms of assembly, monomer. Interacts with and forms tight 1:1 complexes with RNH1. Dimerization of two such complexes may occur. Interaction with RNH1 inhibits this protein. As to expression, pancreas.

It is found in the secreted. It carries out the reaction an [RNA] containing cytidine + H2O = an [RNA]-3'-cytidine-3'-phosphate + a 5'-hydroxy-ribonucleotide-3'-[RNA].. The enzyme catalyses an [RNA] containing uridine + H2O = an [RNA]-3'-uridine-3'-phosphate + a 5'-hydroxy-ribonucleotide-3'-[RNA].. In terms of biological role, endonuclease that catalyzes the cleavage of RNA on the 3' side of pyrimidine nucleotides. Acts on single-stranded and double-stranded RNA. The sequence is that of Ribonuclease pancreatic (Rnase1) from Mus pahari (Gairdner's shrew-mouse).